Reading from the N-terminus, the 1232-residue chain is DNA-directed RNA polymerase subunit beta (1232 aa).

The disordered stretch occupies residues 1170–1232 (SVDEDADELE…LDLDDFGDEH (63 aa)). The span at 1171–1180 (VDEDADELEV) shows a compositional bias: acidic residues. A compositionally biased stretch (basic and acidic residues) spans 1189–1198 (PEEKEEKEKE). Positions 1199–1232 (DSDEYDDLREEDVEPDLEELSLDDLDLDDFGDEH) are enriched in acidic residues.

Belongs to the RNA polymerase beta chain family. In terms of assembly, the RNAP catalytic core consists of 2 alpha, 1 beta, 1 beta' and 1 omega subunit. When a sigma factor is associated with the core the holoenzyme is formed, which can initiate transcription.

The enzyme catalyses RNA(n) + a ribonucleoside 5'-triphosphate = RNA(n+1) + diphosphate. Its function is as follows. DNA-dependent RNA polymerase catalyzes the transcription of DNA into RNA using the four ribonucleoside triphosphates as substrates. The polypeptide is DNA-directed RNA polymerase subunit beta (Clostridium botulinum (strain Hall / ATCC 3502 / NCTC 13319 / Type A)).